A 275-amino-acid polypeptide reads, in one-letter code: Ribosomal protein L11 methyltransferase (275 aa).

S-adenosyl-L-methionine-binding residues include T123, G146, D167, and N208.

It belongs to the methyltransferase superfamily. PrmA family.

The protein resides in the cytoplasm. The catalysed reaction is L-lysyl-[protein] + 3 S-adenosyl-L-methionine = N(6),N(6),N(6)-trimethyl-L-lysyl-[protein] + 3 S-adenosyl-L-homocysteine + 3 H(+). Its function is as follows. Methylates ribosomal protein L11. The sequence is that of Ribosomal protein L11 methyltransferase from Campylobacter fetus subsp. fetus (strain 82-40).